We begin with the raw amino-acid sequence, 338 residues long: Lipoate-protein ligase A (338 aa).

The 188-residue stretch at 29–216 folds into the BPL/LPL catalytic domain; the sequence is PATQRVLFLW…AFFAHYGERV (188 aa). Residues arginine 71, 76-79, and lysine 134 contribute to the ATP site; that span reads GAVF. Lysine 134 is a (R)-lipoate binding site.

This sequence belongs to the LplA family. As to quaternary structure, monomer.

Its subcellular location is the cytoplasm. It carries out the reaction L-lysyl-[lipoyl-carrier protein] + (R)-lipoate + ATP = N(6)-[(R)-lipoyl]-L-lysyl-[lipoyl-carrier protein] + AMP + diphosphate + H(+). The protein operates within protein modification; protein lipoylation via exogenous pathway; protein N(6)-(lipoyl)lysine from lipoate: step 1/2. It participates in protein modification; protein lipoylation via exogenous pathway; protein N(6)-(lipoyl)lysine from lipoate: step 2/2. Functionally, catalyzes both the ATP-dependent activation of exogenously supplied lipoate to lipoyl-AMP and the transfer of the activated lipoyl onto the lipoyl domains of lipoate-dependent enzymes. This is Lipoate-protein ligase A from Escherichia coli (strain K12 / MC4100 / BW2952).